The chain runs to 442 residues: tRNA modification GTPase MnmE (442 aa).

R27, E84, and K124 together coordinate (6S)-5-formyl-5,6,7,8-tetrahydrofolate. In terms of domain architecture, TrmE-type G spans 221-366 (GFQIVILGAP…LMELISQASA (146 aa)). Residues 231 to 236 (NAGKSS), 250 to 256 (TEEPGTT), 275 to 278 (DTAG), and 329 to 332 (NKAD) contribute to the GTP site. Mg(2+) contacts are provided by S235 and T256. Residue K442 participates in (6S)-5-formyl-5,6,7,8-tetrahydrofolate binding.

It belongs to the TRAFAC class TrmE-Era-EngA-EngB-Septin-like GTPase superfamily. TrmE GTPase family. In terms of assembly, homodimer. Heterotetramer of two MnmE and two MnmG subunits. K(+) serves as cofactor.

The protein resides in the cytoplasm. Exhibits a very high intrinsic GTPase hydrolysis rate. Involved in the addition of a carboxymethylaminomethyl (cmnm) group at the wobble position (U34) of certain tRNAs, forming tRNA-cmnm(5)s(2)U34. This is tRNA modification GTPase MnmE from Chelativorans sp. (strain BNC1).